The chain runs to 367 residues: 3-dehydroquinate synthase (367 aa).

NAD(+) contacts are provided by residues 69–74 (DGESHK), 103–107 (GVIGD), 127–128 (TT), Lys-140, Lys-149, and 167–170 (TLAT). Residues Glu-182, His-245, and His-262 each coordinate Zn(2+).

This sequence belongs to the sugar phosphate cyclases superfamily. Dehydroquinate synthase family. The cofactor is Co(2+). Zn(2+) is required as a cofactor. NAD(+) serves as cofactor.

Its subcellular location is the cytoplasm. The enzyme catalyses 7-phospho-2-dehydro-3-deoxy-D-arabino-heptonate = 3-dehydroquinate + phosphate. It functions in the pathway metabolic intermediate biosynthesis; chorismate biosynthesis; chorismate from D-erythrose 4-phosphate and phosphoenolpyruvate: step 2/7. Its function is as follows. Catalyzes the conversion of 3-deoxy-D-arabino-heptulosonate 7-phosphate (DAHP) to dehydroquinate (DHQ). This Stutzerimonas stutzeri (strain A1501) (Pseudomonas stutzeri) protein is 3-dehydroquinate synthase.